We begin with the raw amino-acid sequence, 727 residues long: Catalase-peroxidase (727 aa).

The disordered stretch occupies residues Met1–Arg24. Residues Trp95–Tyr217 constitute a cross-link (tryptophyl-tyrosyl-methioninium (Trp-Tyr) (with M-243)). The Proton acceptor role is filled by His96. A cross-link (tryptophyl-tyrosyl-methioninium (Tyr-Met) (with W-95)) is located at residues Tyr217–Met243. A heme b-binding site is contributed by His258.

This sequence belongs to the peroxidase family. Peroxidase/catalase subfamily. In terms of assembly, homodimer or homotetramer. Requires heme b as cofactor. Post-translationally, formation of the three residue Trp-Tyr-Met cross-link is important for the catalase, but not the peroxidase activity of the enzyme.

It catalyses the reaction H2O2 + AH2 = A + 2 H2O. The catalysed reaction is 2 H2O2 = O2 + 2 H2O. Bifunctional enzyme with both catalase and broad-spectrum peroxidase activity. The polypeptide is Catalase-peroxidase (Rhizobium meliloti (strain 1021) (Ensifer meliloti)).